Reading from the N-terminus, the 306-residue chain is Shugoshin (306 aa).

A coiled-coil region spans residues 28 to 75 (NFKSTNESLIKKNLQLKQQLSQCTKALEKLRNENIALREQNQELIDAT). 2 disordered regions span residues 122–196 (PEPS…GRRS) and 223–306 (IAPS…DTFF). The segment covering 133–161 (PKMECNLEKLDESPVRNFPRSDYEEENKS) has biased composition (basic and acidic residues). A compositionally biased stretch (polar residues) spans 167–181 (NGPSSSSSMTQNLEN). The segment covering 230–241 (GGPPKKAPPRKA) has biased composition (pro residues).

The protein belongs to the shugoshin family.

The protein resides in the nucleus. Its subcellular location is the chromosome. It is found in the centromere. Plays a central role in chromosome cohesion during cell division by preventing premature dissociation of cohesin complex from centromeres after prophase, when most of cohesin complex dissociates from chromosomes arms. This chain is Shugoshin (sgo-1), found in Caenorhabditis briggsae.